Here is a 212-residue protein sequence, read N- to C-terminus: Peptide methionine sulfoxide reductase MsrA (212 aa).

The active site involves cysteine 52.

This sequence belongs to the MsrA Met sulfoxide reductase family.

It catalyses the reaction L-methionyl-[protein] + [thioredoxin]-disulfide + H2O = L-methionyl-(S)-S-oxide-[protein] + [thioredoxin]-dithiol. The enzyme catalyses [thioredoxin]-disulfide + L-methionine + H2O = L-methionine (S)-S-oxide + [thioredoxin]-dithiol. In terms of biological role, has an important function as a repair enzyme for proteins that have been inactivated by oxidation. Catalyzes the reversible oxidation-reduction of methionine sulfoxide in proteins to methionine. This is Peptide methionine sulfoxide reductase MsrA from Yersinia enterocolitica serotype O:8 / biotype 1B (strain NCTC 13174 / 8081).